The chain runs to 89 residues: Snake venom serine protease rhinocerase (89 aa).

Positions 1–89 (VIGGAECDIN…KVFDYIPWIK (89 aa)) constitute a Peptidase S1 domain. Asp-45 acts as the Charge relay system in catalysis. Residues Cys-64 and Cys-69 are joined by a disulfide bond.

The protein belongs to the peptidase S1 family. Snake venom subfamily. Glycosylated. Expressed by the venom gland.

The protein localises to the secreted. Inhibited by PMSF. Not inhibited by benzamidine. Its function is as follows. Snake venom serine protease that cleaves fibrinogen alpha and beta chains (FGA and FGB), but not gamma chains. Exhibits fibrinolytic and kininogenolytic. Preferentially cleaves after Arg and Lys residues. The polypeptide is Snake venom serine protease rhinocerase (Bitis rhinoceros (West African gaboon viper)).